Here is a 244-residue protein sequence, read N- to C-terminus: Orotidine 5'-phosphate decarboxylase (244 aa).

Substrate-binding positions include Asp10, Lys32, 59-68 (DLKLHDIPNT), Thr122, Arg184, Gln193, Gly213, and Arg214. Lys61 (proton donor) is an active-site residue.

Belongs to the OMP decarboxylase family. Type 1 subfamily. Homodimer.

It catalyses the reaction orotidine 5'-phosphate + H(+) = UMP + CO2. It functions in the pathway pyrimidine metabolism; UMP biosynthesis via de novo pathway; UMP from orotate: step 2/2. Functionally, catalyzes the decarboxylation of orotidine 5'-monophosphate (OMP) to uridine 5'-monophosphate (UMP). The polypeptide is Orotidine 5'-phosphate decarboxylase (Geobacillus kaustophilus (strain HTA426)).